We begin with the raw amino-acid sequence, 303 residues long: Sulfotransferase 6B1 (303 aa).

Position 65 to 70 (65 to 70) interacts with 3'-phosphoadenylyl sulfate; the sequence is KCGSNW. His118 (proton acceptor) is an active-site residue. Residues Arg140, Ser148, Tyr203, 237 to 242, and 259 to 261 contribute to the 3'-phosphoadenylyl sulfate site; these read STFQAM and RKG.

This sequence belongs to the sulfotransferase 1 family.

The protein localises to the cytoplasm. It localises to the cytosol. It carries out the reaction thyroxine + 3'-phosphoadenylyl sulfate = thyroxine sulfate + adenosine 3',5'-bisphosphate + H(+). Sulfotransferase that utilizes 3'-phospho-5'-adenylyl sulfate (PAPS) as sulfonate donor to catalyze the sulfate conjugation of thyroxine. Involved in the metabolism of thyroxine. This Gorilla gorilla gorilla (Western lowland gorilla) protein is Sulfotransferase 6B1 (SULT6B1).